A 327-amino-acid chain; its full sequence is Interleukin-12 subunit beta (327 aa).

A signal peptide spans 1-22; the sequence is MHPQQLVVSWFSLVLLASPIVA. Residues 23–106 enclose the Ig-like C2-type domain; sequence IWELEKNVYI…LSRSLLLLHK (84 aa). Residues cysteine 50 and cysteine 90 are joined by a disulfide bond. Residue asparagine 223 is glycosylated (N-linked (GlcNAc...) asparagine). The 90-residue stretch at 238 to 327 folds into the Fibronectin type-III domain; sequence PPKNLQLKPL…WSEWASVSCS (90 aa).

This sequence belongs to the IL-12B family. As to quaternary structure, heterodimer with IL12A; disulfide-linked. The heterodimer is known as interleukin IL-12. Heterodimer with IL23A; disulfide-linked. The heterodimer is known as interleukin IL-23. Also secreted as a monomer. Interacts with NBR1; this interaction promotes IL-12 secretion.

In terms of biological role, cytokine that can act as a growth factor for activated T and NK cells, enhance the lytic activity of NK/lymphokine-activated killer cells, and stimulate the production of IFN-gamma by resting PBMC. Its function is as follows. Associates with IL23A to form the IL-23 interleukin, a heterodimeric cytokine which functions in innate and adaptive immunity. IL-23 may constitute with IL-17 an acute response to infection in peripheral tissues. IL-23 binds to a heterodimeric receptor complex composed of IL12RB1 and IL23R, activates the Jak-Stat signaling cascade, stimulates memory rather than naive T-cells and promotes production of pro-inflammatory cytokines. IL-23 induces autoimmune inflammation and thus may be responsible for autoimmune inflammatory diseases and may be important for tumorigenesis. This Bubalus bubalis (Domestic water buffalo) protein is Interleukin-12 subunit beta (IL12B).